Here is a 113-residue protein sequence, read N- to C-terminus: Phosphoribosyl-ATP pyrophosphatase (113 aa).

This sequence belongs to the PRA-PH family.

The protein resides in the cytoplasm. It catalyses the reaction 1-(5-phospho-beta-D-ribosyl)-ATP + H2O = 1-(5-phospho-beta-D-ribosyl)-5'-AMP + diphosphate + H(+). Its pathway is amino-acid biosynthesis; L-histidine biosynthesis; L-histidine from 5-phospho-alpha-D-ribose 1-diphosphate: step 2/9. This chain is Phosphoribosyl-ATP pyrophosphatase, found in Janthinobacterium sp. (strain Marseille) (Minibacterium massiliensis).